The sequence spans 568 residues: Proline--tRNA ligase (568 aa).

Belongs to the class-II aminoacyl-tRNA synthetase family. ProS type 1 subfamily. As to quaternary structure, homodimer.

It is found in the cytoplasm. It carries out the reaction tRNA(Pro) + L-proline + ATP = L-prolyl-tRNA(Pro) + AMP + diphosphate. Functionally, catalyzes the attachment of proline to tRNA(Pro) in a two-step reaction: proline is first activated by ATP to form Pro-AMP and then transferred to the acceptor end of tRNA(Pro). As ProRS can inadvertently accommodate and process non-cognate amino acids such as alanine and cysteine, to avoid such errors it has two additional distinct editing activities against alanine. One activity is designated as 'pretransfer' editing and involves the tRNA(Pro)-independent hydrolysis of activated Ala-AMP. The other activity is designated 'posttransfer' editing and involves deacylation of mischarged Ala-tRNA(Pro). The misacylated Cys-tRNA(Pro) is not edited by ProRS. This Halorhodospira halophila (strain DSM 244 / SL1) (Ectothiorhodospira halophila (strain DSM 244 / SL1)) protein is Proline--tRNA ligase.